A 77-amino-acid polypeptide reads, in one-letter code: Tachyplesin-1 (77 aa).

The first 23 residues, 1–23, serve as a signal peptide directing secretion; the sequence is MKKLVIALCLMMVLAVMVEEAEA. 2 disulfides stabilise this stretch: cysteine 26/cysteine 39 and cysteine 30/cysteine 35. Arginine 40 carries the arginine amide modification. Positions 41–77 are excised as a propeptide; that stretch reads GKRNEVRQYRDRGYDVRAIPEETFFTRQDEDEDDDEE.

The protein belongs to the tachyplesin/polyphemusin family. Hemocytes.

It is found in the secreted. Its function is as follows. Significantly inhibits the growth of Gram-negative and Gram-positive bacteria. The chain is Tachyplesin-1 from Tachypleus tridentatus (Japanese horseshoe crab).